Here is a 227-residue protein sequence, read N- to C-terminus: Translation initiation factor 6 (227 aa).

This sequence belongs to the eIF-6 family.

In terms of biological role, binds to the 50S ribosomal subunit and prevents its association with the 30S ribosomal subunit to form the 70S initiation complex. This chain is Translation initiation factor 6, found in Methanococcus maripaludis (strain C6 / ATCC BAA-1332).